Reading from the N-terminus, the 429-residue chain is Ribosomal RNA small subunit methyltransferase B (429 aa).

S-adenosyl-L-methionine contacts are provided by residues 254–260 (CAAPGGK), D277, D303, and D322. Catalysis depends on C375, which acts as the Nucleophile.

This sequence belongs to the class I-like SAM-binding methyltransferase superfamily. RsmB/NOP family.

Its subcellular location is the cytoplasm. It catalyses the reaction cytidine(967) in 16S rRNA + S-adenosyl-L-methionine = 5-methylcytidine(967) in 16S rRNA + S-adenosyl-L-homocysteine + H(+). Specifically methylates the cytosine at position 967 (m5C967) of 16S rRNA. This is Ribosomal RNA small subunit methyltransferase B from Escherichia coli O127:H6 (strain E2348/69 / EPEC).